A 316-amino-acid chain; its full sequence is Porphobilinogen deaminase (316 aa).

An S-(dipyrrolylmethanemethyl)cysteine modification is found at Cys245.

Belongs to the HMBS family. Monomer. It depends on dipyrromethane as a cofactor.

It catalyses the reaction 4 porphobilinogen + H2O = hydroxymethylbilane + 4 NH4(+). It participates in porphyrin-containing compound metabolism; protoporphyrin-IX biosynthesis; coproporphyrinogen-III from 5-aminolevulinate: step 2/4. Its pathway is porphyrin-containing compound metabolism; chlorophyll biosynthesis. Functionally, tetrapolymerization of the monopyrrole PBG into the hydroxymethylbilane pre-uroporphyrinogen in several discrete steps. In Prochlorococcus marinus (strain MIT 9515), this protein is Porphobilinogen deaminase.